We begin with the raw amino-acid sequence, 412 residues long: 5,5'-dehydrodivanillate O-demethylase ferredoxin reductase subunit (412 aa).

FAD-binding residues include Ala-14, Lys-49, Val-82, Arg-130, Asp-279, and Val-298.

It belongs to the FAD-dependent oxidoreductase family. As to quaternary structure, monomer. The three-component monooxygenase is composed of an oxygenase (LigXa), a ferredoxin (LigXc) and a ferredoxin reductase (LigXd). The cofactor is FAD.

It carries out the reaction 5,5'-dehydrodivanillate + NADH + O2 + H(+) = 2,2',3-trihydroxy-3'-methoxy-5,5'-dicarboxybiphenyl + formaldehyde + NAD(+) + H2O. Its function is as follows. Involved in the catabolism of 5,5'-dehydrodivanillate (DDVA), an intermediate in the biodegradation of lignin. Part of a three-component monooxygenase that catalyzes the O-demethylation of DDVA, leading to the formation of 2,2',3-trihydroxy-3'-methoxy-5,5'-dicarboxybiphenyl (OH-DDVA). LigXd probably transfers the electrons from NADH to LigXc. This is 5,5'-dehydrodivanillate O-demethylase ferredoxin reductase subunit from Sphingobium sp. (strain NBRC 103272 / SYK-6).